Consider the following 271-residue polypeptide: MKI67 FHA domain-interacting nucleolar phosphoprotein (271 aa).

A disordered region spans residues 1 to 20 (MAEYSGPAKPTLALNPREDS). A2 bears the N-acetylalanine mark. K37 is covalently cross-linked (Glycyl lysine isopeptide (Lys-Gly) (interchain with G-Cter in SUMO2)). The region spanning 44 to 122 (GVVYLGHLPS…RLLSCKFMPR (79 aa)) is the RRM domain. An Omega-N-methylarginine modification is found at R113. Residues K178 and K191 each participate in a glycyl lysine isopeptide (Lys-Gly) (interchain with G-Cter in SUMO2) cross-link. Phosphothreonine occurs at positions 213 and 217. Residues R223 and R224 each carry the omega-N-methylated arginine modification. S226 bears the Phosphoserine mark. A disordered region spans residues 242 to 271 (PVSPVKEDTQKTPAPESSGKKRLRKRKSKQ). Residue K247 forms a Glycyl lysine isopeptide (Lys-Gly) (interchain with G-Cter in SUMO1); alternate linkage. Residue K247 forms a Glycyl lysine isopeptide (Lys-Gly) (interchain with G-Cter in SUMO2); alternate linkage. The span at 261 to 271 (KKRLRKRKSKQ) shows a compositional bias: basic residues.

Binds to the FHA domain of MKI67; this interaction is enhanced in mitosis. In terms of processing, phosphorylated.

The protein localises to the nucleus. It localises to the nucleolus. Its subcellular location is the chromosome. This chain is MKI67 FHA domain-interacting nucleolar phosphoprotein (Nifk), found in Rattus norvegicus (Rat).